The following is a 291-amino-acid chain: ATP synthase subunit a (291 aa).

Transmembrane regions (helical) follow at residues 50-70 (LDSM…FWIV), 108-128 (IAPL…MDLI), 129-149 (PVDW…GMDP), 161-181 (DPNI…FYSI), 203-223 (PVAK…TFLA), 241-261 (LIFI…SVPW), and 262-282 (AIFH…LTIV).

It belongs to the ATPase A chain family. As to quaternary structure, F-type ATPases have 2 components, CF(1) - the catalytic core - and CF(0) - the membrane proton channel. CF(1) has five subunits: alpha(3), beta(3), gamma(1), delta(1), epsilon(1). CF(0) has three main subunits: a(1), b(2) and c(9-12). The alpha and beta chains form an alternating ring which encloses part of the gamma chain. CF(1) is attached to CF(0) by a central stalk formed by the gamma and epsilon chains, while a peripheral stalk is formed by the delta and b chains.

It localises to the cell inner membrane. In terms of biological role, key component of the proton channel; it plays a direct role in the translocation of protons across the membrane. The protein is ATP synthase subunit a of Acinetobacter baumannii (strain AB307-0294).